Consider the following 196-residue polypeptide: uncharacterized protein (196 aa).

A helical membrane pass occupies residues 20–40; the sequence is GALALGCIALLLMGIVGCTTV.

It is found in the membrane. This is an uncharacterized protein from Mycobacterium tuberculosis (strain CDC 1551 / Oshkosh).